Consider the following 310-residue polypeptide: Metal ABC transporter substrate-binding lipoprotein ScbA (310 aa).

The N-terminal stretch at 1–19 (MKKCRFLVLLLLAFVGLAA) is a signal peptide. A lipid anchor (N-palmitoyl cysteine) is attached at cysteine 20. Cysteine 20 carries the S-diacylglycerol cysteine lipid modification. The a divalent metal cation site is built by histidine 68, histidine 140, glutamate 206, and aspartate 281.

Belongs to the bacterial solute-binding protein 9 family.

Its subcellular location is the cell membrane. Its function is as follows. Part of an ATP-binding cassette (ABC) transport system involved in metal import. Binds a metal with high affinity and specificity and delivers it to the membrane permease for translocation into the cytoplasm. Part of an ATP-driven transport system for manganese. Does not exhibit adhesion properties. In Streptococcus cristatus, this protein is Metal ABC transporter substrate-binding lipoprotein ScbA (scbA).